Reading from the N-terminus, the 440-residue chain is Glutamyl-tRNA reductase (440 aa).

Substrate is bound by residues 55–58 (TCNR), Ser-115, 120–122 (ETQ), and Gln-126. Residue Cys-56 is the Nucleophile of the active site. 199 to 204 (GSGEMG) lines the NADP(+) pocket.

The protein belongs to the glutamyl-tRNA reductase family. In terms of assembly, homodimer.

It catalyses the reaction (S)-4-amino-5-oxopentanoate + tRNA(Glu) + NADP(+) = L-glutamyl-tRNA(Glu) + NADPH + H(+). Its pathway is porphyrin-containing compound metabolism; protoporphyrin-IX biosynthesis; 5-aminolevulinate from L-glutamyl-tRNA(Glu): step 1/2. Functionally, catalyzes the NADPH-dependent reduction of glutamyl-tRNA(Glu) to glutamate 1-semialdehyde (GSA). The sequence is that of Glutamyl-tRNA reductase from Helicobacter hepaticus (strain ATCC 51449 / 3B1).